A 152-amino-acid polypeptide reads, in one-letter code: Acidic phospholipase A2 homolog textilotoxin D chain (152 aa).

Residues methionine 1 to alanine 19 form the signal peptide. 7 cysteine pairs are disulfide-bonded: cysteine 38/cysteine 104, cysteine 54/cysteine 151, cysteine 56/cysteine 72, cysteine 71/cysteine 132, cysteine 78/cysteine 125, cysteine 88/cysteine 118, and cysteine 111/cysteine 123. Residue asparagine 112 is glycosylated (N-linked (GlcNAc...) asparagine).

This sequence belongs to the phospholipase A2 family. Group I subfamily. D49 sub-subfamily. Heterohexamer. 2 forms exist: 2 A or 2 B chains, 2 C chains and 2 covalently-linked D chains, and 1 A or 1 B, 1 C, 2 covalently-linked D chains and 2 differentially glycosylated covalently-linked D chains. Textilotoxin was originally described as pentameric. In terms of tissue distribution, expressed by the venom gland.

The protein localises to the secreted. Snake venom oligomeric phospholipase A2 that has potent presynaptic neurotoxicity. Chain D is not itself neurotoxic, but it is essential for the neurotoxicity of textilotoxin. Chain D possesses a very low phospholipase activity. This Pseudonaja textilis (Eastern brown snake) protein is Acidic phospholipase A2 homolog textilotoxin D chain.